The chain runs to 385 residues: Exopolygalacturonase rpg15 (385 aa).

The first 26 residues, 1–26 (MVRFISFTSPIAALLLLSFGVKHAST), serve as a signal peptide directing secretion. Asn143, Asn161, Asn164, and Asn180 each carry an N-linked (GlcNAc...) asparagine glycan. PbH1 repeat units follow at residues 165-195 (STNL…DLYH), 196-217 (SSGI…AIKE), 219-241 (VEKV…GSLG), and 249-270 (VKHV…RVKT). Asp210 serves as the catalytic Proton donor. Cysteines 212 and 229 form a disulfide. Residue Asn226 is glycosylated (N-linked (GlcNAc...) asparagine). The active site involves His233. Asn256, Asn319, and Asn343 each carry an N-linked (GlcNAc...) asparagine glycan. Cys344 and Cys350 are oxidised to a cystine. One copy of the PbH1 5 repeat lies at 350–376 (CSDITFSGIDITKASNTTDNVCVYLEG). N-linked (GlcNAc...) asparagine glycosylation occurs at Asn365.

It belongs to the glycosyl hydrolase 28 family. In terms of processing, N-glycosylated.

The protein localises to the secreted. It carries out the reaction [(1-&gt;4)-alpha-D-galacturonosyl](n) + H2O = alpha-D-galacturonate + [(1-&gt;4)-alpha-D-galacturonosyl](n-1). In terms of biological role, specific in hydrolyzing the terminal glycosidic bond of polygalacturonic acid and oligogalacturonates. The polypeptide is Exopolygalacturonase rpg15 (Rhizopus delemar (strain RA 99-880 / ATCC MYA-4621 / FGSC 9543 / NRRL 43880) (Mucormycosis agent)).